Here is a 62-residue protein sequence, read N- to C-terminus: Small ribosomal subunit protein eS27 (62 aa).

C17, C20, C36, and C39 together coordinate Zn(2+). A C4-type zinc finger spans residues 17-39; that stretch reads CPECNNEQIVFGSPATVVKCLTC.

Belongs to the eukaryotic ribosomal protein eS27 family. Part of the 30S ribosomal subunit. Zn(2+) is required as a cofactor.

This Methanocaldococcus jannaschii (strain ATCC 43067 / DSM 2661 / JAL-1 / JCM 10045 / NBRC 100440) (Methanococcus jannaschii) protein is Small ribosomal subunit protein eS27.